The chain runs to 292 residues: Protease HtpX (292 aa).

2 helical membrane passes run 5–25 (IFLF…VMSL) and 34–54 (SGLL…SLLL). H140 serves as a coordination point for Zn(2+). Residue E141 is part of the active site. Residue H144 coordinates Zn(2+). Transmembrane regions (helical) follow at residues 155-175 (LLQG…GGII) and 193-213 (IIVF…AMWF). E218 serves as a coordination point for Zn(2+).

This sequence belongs to the peptidase M48B family. Requires Zn(2+) as cofactor.

The protein localises to the cell inner membrane. This chain is Protease HtpX, found in Xanthomonas axonopodis pv. citri (strain 306).